The following is a 423-amino-acid chain: RNA polymerase sigma factor SigA (423 aa).

A disordered region spans residues 1–76; the sequence is MKKSKRKNAQ…EEDLPIPKIS (76 aa). The span at 21–70 shows a compositional bias: acidic residues; it reads VQEEAEELPEFPEGEPDPDLEDPDLALEDDLLDLPEEGEGLDLEEEEEDL. The segment at 78-113 is sigma-70 factor domain-1; the sequence is SDPVRQYLHEIGQVPLLTLEEEVELARKVEEGMEAI. The segment at 187–257 is sigma-70 factor domain-2; that stretch reads LIEANLRLVV…NRAIADQART (71 aa). Residues 211–214 carry the Interaction with polymerase core subunit RpoC motif; that stretch reads DLIQ. Residues 266–344 form a sigma-70 factor domain-3 region; it reads ETINKLSRTA…DEHLPSPVDA (79 aa). The interval 357–409 is sigma-70 factor domain-4; that stretch reads ALSKLSEREAMVLKLRKGLIDGREHTLEEVGAFFGVTRERIRQIENKALRKLK. The segment at residues 383–402 is a DNA-binding region (H-T-H motif); sequence LEEVGAFFGVTRERIRQIEN.

The protein belongs to the sigma-70 factor family. RpoD/SigA subfamily. As to quaternary structure, interacts transiently with the RNA polymerase catalytic core formed by RpoA, RpoB, RpoC and RpoZ (2 alpha, 1 beta, 1 beta' and 1 omega subunit) to form the RNA polymerase holoenzyme that can initiate transcription.

The protein localises to the cytoplasm. Functionally, sigma factors are initiation factors that promote the attachment of RNA polymerase to specific initiation sites and are then released. This sigma factor is the primary sigma factor during exponential growth. This chain is RNA polymerase sigma factor SigA, found in Thermus thermophilus (strain ATCC BAA-163 / DSM 7039 / HB27).